The following is a 1338-amino-acid chain: Vascular endothelial growth factor receptor 1 (1338 aa).

Residues 1-26 (MVSYWDTGVLLCALLSCLLLTGSSSG) form the signal peptide. Residues 27–758 (SKLKDPELSL…QGTSDKSNLE (732 aa)) are Extracellular-facing. 7 consecutive Ig-like C2-type domains span residues 32–123 (PELS…TESA), 151–214 (GREL…VNGH), 230–327 (IDVQ…TSVH), 335–421 (TVKH…LTAT), 428–553 (PQIY…FYIT), 556–654 (PNGF…KEIT), and 661–747 (PYLL…AYLT). Intrachain disulfides connect Cys-53–Cys-107 and Cys-158–Cys-207. N-linked (GlcNAc...) asparagine glycans are attached at residues Asn-100, Asn-164, Asn-196, and Asn-251. A disulfide bond links Cys-252 and Cys-311. 9 N-linked (GlcNAc...) asparagine glycosylation sites follow: Asn-323, Asn-402, Asn-417, Asn-474, Asn-547, Asn-597, Asn-620, Asn-625, and Asn-666. The cysteines at positions 454 and 535 are disulfide-linked. A disulfide bond links Cys-577 and Cys-636. A disulfide bond links Cys-682 and Cys-731. Residues 759–780 (LITLTCTCVAATLFWLLLTLFI) traverse the membrane as a helical segment. Residues 781–1338 (RKMKRSSSEI…SVVLYSTPPI (558 aa)) lie on the Cytoplasmic side of the membrane. Positions 827 to 1158 (LKLGKSLGRG…ELVEKLGDLL (332 aa)) constitute a Protein kinase domain. ATP-binding positions include 833-841 (LGRGAFGKV) and Lys-861. Tyr-914 carries the post-translational modification Phosphotyrosine; by autocatalysis. A compositionally biased stretch (basic and acidic residues) spans 940–957 (PKKEKMEPGLEQGKKPRL). Positions 940–982 (PKKEKMEPGLEQGKKPRLDSVTSSESFASSGFQEDKSLSDVEE) are disordered. Polar residues predominate over residues 959–971 (SVTSSESFASSGF). The Proton acceptor role is filled by Asp-1022. Phosphotyrosine; by autocatalysis is present on residues Tyr-1053, Tyr-1169, Tyr-1213, Tyr-1242, Tyr-1309, Tyr-1327, and Tyr-1333.

Belongs to the protein kinase superfamily. Tyr protein kinase family. CSF-1/PDGF receptor subfamily. As to quaternary structure, interacts with VEGFA, VEGFB and PGF. Monomer in the absence of bound VEGFA, VEGFB or PGF. Homodimer in the presence of bound VEGFA, VEGFB and PGF. Can also form a heterodimer with KDR. Interacts (when tyrosine phosphorylated) with CBL, CRK, GRB2, NCK1, PIK3R1, PLCG, PSEN1 and PTPN11. Probably also interacts with PTPRB. Interacts with RACK1. Identified in a complex with CBL and CD2AP. N-glycosylated. Post-translationally, ubiquitinated after VEGFA-mediated autophosphorylation, leading to proteolytic degradation. In terms of processing, autophosphorylated on tyrosine residues upon ligand binding. Autophosphorylation occurs in trans, i.e. one subunit of the dimeric receptor phosphorylates tyrosine residues on the other subunit. Phosphorylation at Tyr-1169 is important for interaction with PLCG. Phosphorylation at Tyr-1213 is important for interaction with PIK3R1, PTPN11, GRB2, and PLCG. Phosphorylation at Tyr-1333 is important for endocytosis and for interaction with CBL, NCK1 and CRK. Is probably dephosphorylated by PTPRB. As to expression, detected in normal lung, but also in placenta, liver, kidney, heart and brain tissues. Specifically expressed in most of the vascular endothelial cells, and also expressed in peripheral blood monocytes. Isoform 2 is strongly expressed in placenta. Isoform 3 is expressed in corneal epithelial cells (at protein level). Isoform 3 is expressed in vascular smooth muscle cells (VSMC).

The protein resides in the cell membrane. It localises to the endosome. It is found in the secreted. The protein localises to the cytoplasm. It carries out the reaction L-tyrosyl-[protein] + ATP = O-phospho-L-tyrosyl-[protein] + ADP + H(+). With respect to regulation, present in an inactive conformation in the absence of bound ligand. Binding of VEGFA, VEGFB or PGF leads to dimerization and activation by autophosphorylation on tyrosine residues. In terms of biological role, tyrosine-protein kinase that acts as a cell-surface receptor for VEGFA, VEGFB and PGF, and plays an essential role in the development of embryonic vasculature, the regulation of angiogenesis, cell survival, cell migration, macrophage function, chemotaxis, and cancer cell invasion. Acts as a positive regulator of postnatal retinal hyaloid vessel regression. May play an essential role as a negative regulator of embryonic angiogenesis by inhibiting excessive proliferation of endothelial cells. Can promote endothelial cell proliferation, survival and angiogenesis in adulthood. Its function in promoting cell proliferation seems to be cell-type specific. Promotes PGF-mediated proliferation of endothelial cells, proliferation of some types of cancer cells, but does not promote proliferation of normal fibroblasts (in vitro). Has very high affinity for VEGFA and relatively low protein kinase activity; may function as a negative regulator of VEGFA signaling by limiting the amount of free VEGFA and preventing its binding to KDR. Modulates KDR signaling by forming heterodimers with KDR. Ligand binding leads to the activation of several signaling cascades. Activation of PLCG leads to the production of the cellular signaling molecules diacylglycerol and inositol 1,4,5-trisphosphate and the activation of protein kinase C. Mediates phosphorylation of PIK3R1, the regulatory subunit of phosphatidylinositol 3-kinase, leading to activation of phosphatidylinositol kinase and the downstream signaling pathway. Mediates activation of MAPK1/ERK2, MAPK3/ERK1 and the MAP kinase signaling pathway, as well as of the AKT1 signaling pathway. Phosphorylates SRC and YES1, and may also phosphorylate CBL. Promotes phosphorylation of AKT1 at 'Ser-473'. Promotes phosphorylation of PTK2/FAK1. Functionally, phosphorylates PLCG. Its function is as follows. May function as decoy receptor for VEGFA. Has a truncated kinase domain; it increases phosphorylation of SRC at 'Tyr-418' by unknown means and promotes tumor cell invasion. The protein is Vascular endothelial growth factor receptor 1 (FLT1) of Homo sapiens (Human).